A 357-amino-acid polypeptide reads, in one-letter code: Scopoletin 8-hydroxylase (357 aa).

A Fe2OG dioxygenase domain is found at 206–307; that stretch reads MGTKMVNMNY…RVSVPIFTAP (102 aa). Tyr-216 contacts 2-oxoglutarate. Fe cation contacts are provided by His-231, Asp-233, and His-288. 2-oxoglutarate is bound by residues Arg-298 and Ser-300.

It belongs to the iron/ascorbate-dependent oxidoreductase family. L-ascorbate is required as a cofactor. It depends on Fe(2+) as a cofactor. Expressed in both primary and lateral roots under iron-deficient conditions, except in apical root zones, and mostly in the root epidermal layer.

The enzyme catalyses scopoletin + 2-oxoglutarate + O2 = fraxetin + succinate + CO2. It functions in the pathway phenylpropanoid metabolism. Its function is as follows. Involved in the pathway of sideretin biosynthesis from feruloyl CoA, a redox-active catecholic metabolite exuded by roots in response to iron deficiency in order to facilitate the uptake of iron; this pathway consists in the successive conversion from feruloyl CoA to scopoletin, from scopoletin to fraxetin and from fraxetin to sideretin. Catalyzes the biosynthesis of fraxetin via scopoletin hydroxylation. The protein is Scopoletin 8-hydroxylase of Arabidopsis thaliana (Mouse-ear cress).